Reading from the N-terminus, the 289-residue chain is ATP synthase mitochondrial F1 complex assembly factor 2 (289 aa).

The N-terminal 40 residues, 1–40, are a transit peptide targeting the mitochondrion; that stretch reads MWRIYPRLRDRWRGLLDRRLSDPTVSVWPGPAPQPPARAY. At K133 the chain carries N6-succinyllysine.

It belongs to the ATP12 family. As to quaternary structure, interacts with ATP5F1B; involved in the assembly of the F1 component of the mitochondrial ATP synthase (ATPase). Interacts with FMC1.

It is found in the mitochondrion inner membrane. In terms of biological role, plays a role in the assembly of the F1 component of the mitochondrial ATP synthase (ATPase). The sequence is that of ATP synthase mitochondrial F1 complex assembly factor 2 from Mus musculus (Mouse).